Here is a 976-residue protein sequence, read N- to C-terminus: Ephrin type-A receptor 2 (976 aa).

Positions 1–23 (MELQAARACFALLWGCALAAAAA) are cleaved as a signal peptide. The segment at 1-206 (MELQAARACF…YYKKCPELLQ (206 aa)) is mediates interaction with CLDN4. At 24–537 (AQGKEVVLLD…SPEGSGNLAV (514 aa)) the chain is on the extracellular side. Positions 28–206 (EVVLLDFAAA…YYKKCPELLQ (179 aa)) constitute an Eph LBD domain. 2 disulfides stabilise this stretch: Cys-70–Cys-188 and Cys-105–Cys-115. Positions 328-432 (PPSAPHYLTA…TSRSFRTASV (105 aa)) constitute a Fibronectin type-III 1 domain. N-linked (GlcNAc...) asparagine glycans are attached at residues Asn-407 and Asn-435. The Fibronectin type-III 2 domain maps to 438–529 (EPPKVRLEGR…KVHEFQTLSP (92 aa)). A helical membrane pass occupies residues 538–558 (IGGVAVGVVLLLVLAGVGFFI). Residues 559-976 (HRRRKNQRAR…DQVNTVGIPI (418 aa)) are Cytoplasmic-facing. Ser-570 is modified (phosphoserine). Tyr-575 is modified (phosphotyrosine). At Ser-579 the chain carries Phosphoserine. Position 588 is a phosphotyrosine; by autocatalysis (Tyr-588). Position 594 is a phosphotyrosine (Tyr-594). Residues 606–906 (TEIHPSCVTR…STSGSEGVPF (301 aa)) are mediates interaction with ARHGEF16 and ELMO2. The 263-residue stretch at 613–875 (VTRQKVIGAG…DIVSILDKLI (263 aa)) folds into the Protein kinase domain. 619–627 (IGAGEFGEV) provides a ligand contact to ATP. Residue Tyr-628 is modified to Phosphotyrosine. Lys-646 contacts ATP. Thr-647 is modified (phosphothreonine). The residue at position 735 (Tyr-735) is a Phosphotyrosine; by autocatalysis. Catalysis depends on Asp-739, which acts as the Proton acceptor. Residue Tyr-772 is modified to Phosphotyrosine. Phosphoserine is present on residues Ser-869 and Ser-892. A negatively regulates interaction with ARHGEF16 region spans residues 886 to 976 (DFDPRVSIRL…DQVNTVGIPI (91 aa)). A Phosphoserine; by PKB/AKT1, RPS6KA1, RPS6KA3 AND PKA modification is found at Ser-897. Ser-901 is subject to Phosphoserine. Positions 904-968 (VPFRTVSEWL…AYSLLGLKDQ (65 aa)) constitute an SAM domain. At Tyr-921 the chain carries Phosphotyrosine; by autocatalysis. Residue Tyr-930 is modified to Phosphotyrosine. Positions 974–976 (IPI) match the PDZ-binding motif.

The protein belongs to the protein kinase superfamily. Tyr protein kinase family. Ephrin receptor subfamily. As to quaternary structure, homodimer. Interacts with SLA. Interacts (phosphorylated form) with VAV2, VAV3 and PI3-kinase p85 subunit (PIK3R1, PIK3R2 or PIK3R3); critical for the EFNA1-induced activation of RAC1 which stimulates cell migration. Interacts with INPPL1; regulates activated EPHA2 endocytosis and degradation. Interacts (inactivated form) with PTK2/FAK1 and interacts (EFNA1 ligand-activated form) with PTPN11; regulates integrin-mediated adhesion. Interacts with ARHGEF16, DOCK4 and ELMO2; mediates ligand-independent activation of RAC1 which stimulates cell migration. Interacts with CLDN4; phosphorylates CLDN4 and may regulate tight junctions. Interacts with ACP1. Interacts (via SAM domain) with ANKS1A (via SAM domain). Interacts with CEMIP. Interacts with NCK1; may regulate EPHA2 activity in cell migration and adhesion. Interacts with TIMD4. (Microbial infection) Interacts with human herpes virus 8/HHV-8 glycoprotein L/gL and glycoprotein H/gH heterodimer; this interaction triggers EPHA2 phosphorylation and endocytosis, allowing virus entry. In terms of assembly, (Microbial infection) Interacts with human cytomegalovirus (HCMV) glycoprotein L/gL and glycoprotein H/gH heterodimer. As to quaternary structure, (Microbial infection) Interacts with Epstein-Barr virus/HHV-4 glycoprotein L/gL and glycoprotein H/gH heterodimer; this interaction facilitates virus internalization and fusion. In terms of processing, autophosphorylates. Phosphorylated on tyrosine upon binding and activation by EFNA1. Phosphorylated residues Tyr-588 and Tyr-594 are required for binding VAV2 and VAV3 while phosphorylated residues Tyr-735 and Tyr-930 are required for binding PI3-kinase p85 subunit (PIK3R1, PIK3R2 or PIK3R3). These phosphorylated residues are critical for recruitment of VAV2 and VAV3 and PI3-kinase p85 subunit which transduce downstream signaling to activate RAC1 GTPase and cell migration. Dephosphorylation of Tyr-930 by PTPRF prevents the interaction of EPHA2 with NCK1. Phosphorylated at Ser-897 by PKB; serum-induced phosphorylation which targets EPHA2 to the cell leading edge and stimulates cell migration. Phosphorylation by PKB is inhibited by EFNA1-activated EPHA2 which regulates PKB activity via a reciprocal regulatory loop. Phosphorylated at Ser-897 in response to TNF by RPS6KA1 and RPS6KA3; RPS6KA-EPHA2 signaling pathway controls cell migration. Phosphorylated at Ser-897 by PKA; blocks cell retraction induced by EPHA2 kinase activity. Dephosphorylated by ACP1. Post-translationally, ubiquitinated by CHIP/STUB1. Ubiquitination is regulated by the HSP90 chaperone and regulates the receptor stability and activity through proteasomal degradation. ANKS1A prevents ubiquitination and degradation. In terms of tissue distribution, expressed in brain and glioma tissue and glioma cell lines (at protein level). Expressed most highly in tissues that contain a high proportion of epithelial cells, e.g. skin, intestine, lung, and ovary.

It localises to the cell membrane. It is found in the cell projection. The protein resides in the ruffle membrane. Its subcellular location is the lamellipodium membrane. The protein localises to the cell junction. It localises to the focal adhesion. The catalysed reaction is L-tyrosyl-[protein] + ATP = O-phospho-L-tyrosyl-[protein] + ADP + H(+). In terms of biological role, receptor tyrosine kinase which binds promiscuously membrane-bound ephrin-A family ligands residing on adjacent cells, leading to contact-dependent bidirectional signaling into neighboring cells. The signaling pathway downstream of the receptor is referred to as forward signaling while the signaling pathway downstream of the ephrin ligand is referred to as reverse signaling. Activated by the ligand ephrin-A1/EFNA1 regulates migration, integrin-mediated adhesion, proliferation and differentiation of cells. Regulates cell adhesion and differentiation through DSG1/desmoglein-1 and inhibition of the ERK1/ERK2 (MAPK3/MAPK1, respectively) signaling pathway. May also participate in UV radiation-induced apoptosis and have a ligand-independent stimulatory effect on chemotactic cell migration. During development, may function in distinctive aspects of pattern formation and subsequently in development of several fetal tissues. Involved for instance in angiogenesis, in early hindbrain development and epithelial proliferation and branching morphogenesis during mammary gland development. Engaged by the ligand ephrin-A5/EFNA5 may regulate lens fiber cells shape and interactions and be important for lens transparency development and maintenance. With ephrin-A2/EFNA2 may play a role in bone remodeling through regulation of osteoclastogenesis and osteoblastogenesis. Functionally, (Microbial infection) Acts as a receptor for hepatitis C virus (HCV) in hepatocytes and facilitates its cell entry. Mediates HCV entry by promoting the formation of the CD81-CLDN1 receptor complexes that are essential for HCV entry and by enhancing membrane fusion of cells expressing HCV envelope glycoproteins. Its function is as follows. Acts as a receptor for human cytomegalovirus (HCMV) to mediate viral entry and fusion in glioblastoma cells. This Homo sapiens (Human) protein is Ephrin type-A receptor 2 (EPHA2).